The chain runs to 255 residues: 14-3-3-like protein B (255 aa).

Belongs to the 14-3-3 family.

This chain is 14-3-3-like protein B, found in Nicotiana tabacum (Common tobacco).